We begin with the raw amino-acid sequence, 126 residues long: Small ribosomal subunit protein uS13 (126 aa).

A disordered region spans residues 92–126 (HRRGLPVRGQRTKTNARTRKGPKKTVAGKKKATRK).

It belongs to the universal ribosomal protein uS13 family. Part of the 30S ribosomal subunit. Forms a loose heterodimer with protein S19. Forms two bridges to the 50S subunit in the 70S ribosome.

Its function is as follows. Located at the top of the head of the 30S subunit, it contacts several helices of the 16S rRNA. In the 70S ribosome it contacts the 23S rRNA (bridge B1a) and protein L5 of the 50S subunit (bridge B1b), connecting the 2 subunits; these bridges are implicated in subunit movement. Contacts the tRNAs in the A and P-sites. In Deinococcus radiodurans (strain ATCC 13939 / DSM 20539 / JCM 16871 / CCUG 27074 / LMG 4051 / NBRC 15346 / NCIMB 9279 / VKM B-1422 / R1), this protein is Small ribosomal subunit protein uS13.